An 847-amino-acid polypeptide reads, in one-letter code: Guanine nucleotide exchange factor VAV3 (847 aa).

Residues 1–119 enclose the Calponin-homology (CH) domain; the sequence is MEPWKQCAQW…ETLSRLSRTP (119 aa). Y141 is subject to Phosphotyrosine. Residues 192–371 form the DH domain; sequence IRSCCLAEIK…KDLAQYVNEV (180 aa). A PH domain is found at 400–502; sequence RPQGDGEIRI…WLEQFEMALS (103 aa). The Phorbol-ester/DAG-type zinc-finger motif lies at 513 to 562; it reads FHDFKMHTFTRVTSCKVCQMLLRGTFYQGYLCFKCGARAHKECLGRVDNC. A sufficient for interaction with ROS1 region spans residues 560-847; sequence DNCGRVNSGE…FPSTYVEEDE (288 aa). The 69-residue stretch at 592 to 660 folds into the SH3 1 domain; sequence PGLPKMQVIR…PSDAVKPCPC (69 aa). The SH2 domain occupies 672-766; it reads WYAGAMERLQ…TLDTTLQFPY (95 aa). The SH3 2 domain maps to 788 to 847; it reads KVLGIAIARYDFCARDMRELSLLKGDVVKIYTKMSANGWWRGEVNGRVGWFPSTYVEEDE.

In terms of assembly, interacts with the PH domain of SH2B2. Interacts (via SH2 domains) with the phosphorylated form of EPHA2. Interacts with ROS1; constitutive interaction that mediates VAV3 phosphorylation. Phosphorylated. Phosphorylation can be mediated by ROS1. In osteoclasts, undergoes tyrosine phosphorylation in response to CSF1. As to expression, isoform 1 and isoform 3 are widely expressed; both are expressed at very low levels in skeletal muscle. In keratinocytes, isoform 1 is less abundant than isoform 3. Isoform 3 is detected at very low levels, if any, in adrenal gland, bone marrow, spleen, fetal brain and spinal cord; in these tissues, isoform 1 is readily detectable.

Functionally, exchange factor for GTP-binding proteins RhoA, RhoG and, to a lesser extent, Rac1. Binds physically to the nucleotide-free states of those GTPases. Plays an important role in angiogenesis. Its recruitment by phosphorylated EPHA2 is critical for EFNA1-induced RAC1 GTPase activation and vascular endothelial cell migration and assembly. May be important for integrin-mediated signaling, at least in some cell types. In osteoclasts, along with SYK tyrosine kinase, required for signaling through integrin alpha-v/beta-1 (ITAGV-ITGB1), a crucial event for osteoclast proper cytoskeleton organization and function. This signaling pathway involves RAC1, but not RHO, activation. Necessary for proper wound healing. In the course of wound healing, required for the phagocytotic cup formation preceding macrophage phagocytosis of apoptotic neutrophils. Responsible for integrin beta-2 (ITGB2)-mediated macrophage adhesion and, to a lesser extent, contributes to beta-3 (ITGB3)-mediated adhesion. Does not affect integrin beta-1 (ITGB1)-mediated adhesion. This is Guanine nucleotide exchange factor VAV3 (VAV3) from Homo sapiens (Human).